The primary structure comprises 314 residues: Tudor-interacting repair regulator protein (314 aa).

G2 carries the N-myristoyl glycine lipid modification.

It belongs to the Nudix hydrolase family. TIRR subfamily. As to quaternary structure, interacts (via the cytoplasmic part) with syndecan-4 (SDC4), but not with other syndecan proteins. Myristoylated in vitro; additional evidence is however required to confirm myristoylation in vivo. In terms of tissue distribution, ubiquitously expressed. Expressed in embryonic brain, eyes, gizzard, heart, intestine, kidney, liver, tibia and skin.

It localises to the nucleus. The protein resides in the cytoplasm. The protein localises to the cytoskeleton. Its subcellular location is the cell membrane. It is found in the cell junction. It localises to the focal adhesion. In terms of biological role, key regulator of TP53BP1 required to stabilize TP53BP1 and regulate its recruitment to chromatin. This Gallus gallus (Chicken) protein is Tudor-interacting repair regulator protein (NUDT16L1).